We begin with the raw amino-acid sequence, 234 residues long: dTDP-4-amino-4,6-dideoxyglucose formyltransferase (234 aa).

DTDP-4-amino-4,6-dideoxy-alpha-D-glucose-binding positions include N9 and 62 to 64 (HCK). Position 65–67 (65–67 (QRF)) interacts with (6R)-10-formyltetrahydrofolate. The Proton acceptor role is filled by H81. 90–94 (GWFPQ) contributes to the dTDP-4-amino-4,6-dideoxy-alpha-D-glucose binding site. Positions 112, 116, and 175 each coordinate (6R)-10-formyltetrahydrofolate. N209 provides a ligand contact to dTDP-4-amino-4,6-dideoxy-alpha-D-glucose.

The protein belongs to the dTDP-Qui4N formyltransferase family. In terms of assembly, homodimer.

The catalysed reaction is dTDP-4-amino-4,6-dideoxy-alpha-D-glucose + (6R)-10-formyltetrahydrofolate = dTDP-4-formamido-4,6-dideoxy-alpha-D-glucose + (6S)-5,6,7,8-tetrahydrofolate + H(+). In terms of biological role, sugar N-formyltransferase that catalyzes the conversion of dTDP-4-amino-4,6-dideoxyglucose into dTDP-4-formamido-4,6-dideoxyglucose using N(10)-formyltetrahydrofolate as the carbon source. Plays a role in virulence. The protein is dTDP-4-amino-4,6-dideoxyglucose formyltransferase of Mycobacterium bovis (strain ATCC BAA-935 / AF2122/97).